A 495-amino-acid polypeptide reads, in one-letter code: Heat stress transcription factor A-1a (495 aa).

Residues 50–144 (PPPFLSKTYD…LLKKISRRKS (95 aa)) mediate DNA binding. Residues 140–164 (SRRKSVQGHGSSSSNPQSQQLSQGQ) are disordered. The segment covering 146 to 164 (QGHGSSSSNPQSQQLSQGQ) has biased composition (low complexity). The segment at 172-238 (SCVEVGKFGL…QIMSFLAKAV (67 aa)) is hydrophobic repeat HR-A/B. The disordered stretch occupies residues 255 to 288 (NMHVTEANKKRRLREDSTAATESNSHSHSLEASD). The short motif at 262-268 (NKKRRLR) is the Nuclear localization signal element. The span at 272–281 (TAATESNSHS) shows a compositional bias: polar residues. The short motif at 433-442 (FEFLEEYMPE) is the AHA element. A disordered region spans residues 445 to 477 (VFGDATTLENNNNNNNNNNNNNNNNNNNNTNGR). The segment covering 454–473 (NNNNNNNNNNNNNNNNNNNN) has biased composition (low complexity). The short motif at 482 to 489 (LIEELGLL) is the Nuclear export signal element.

It belongs to the HSF family. Class A subfamily. In terms of assembly, homotrimer. Interacts with HSP70-1 and HSP70-4. Binds to CRK1. Binds to HSBP. Exhibits temperature-dependent phosphorylation. Phosphorylated by CRK1. As to expression, constitutively expressed.

Its subcellular location is the cytoplasm. The protein localises to the nucleus. Functionally, transcriptional activator that specifically binds DNA sequence 5'-AGAAnnTTCT-3' known as heat shock promoter elements (HSE). In Arabidopsis thaliana (Mouse-ear cress), this protein is Heat stress transcription factor A-1a (HSFA1A).